Consider the following 181-residue polypeptide: Sporozoite-associated mosquito saliva protein 1 (181 aa).

The first 24 residues, 1–24 (MNSSWRVVVFLGLVILCHSRRARA), serve as a signal peptide directing secretion.

Salivary gland (at protein level). In terms of tissue distribution, (Microbial infection) Detected with Plasmodium berghei sporozoites isolated from the saliva of infected Anopheles gambiae mosquitoes (at protein level).

The protein resides in the secreted. Functionally, decreases host neutrophil chemotaxis induced by N-formylmethionine-leucyl-phenylalanine (fMLP). In terms of biological role, (Microbial infection) Interacts with the surface of Plasmodium berghei sporozoites. Enhances sporozoite gliding activity. Enhances host hepatocyte traversal by sporozoites. The chain is Sporozoite-associated mosquito saliva protein 1 from Anopheles gambiae (African malaria mosquito).